Here is an 82-residue protein sequence, read N- to C-terminus: Colonization factor (82 aa).

The signal sequence occupies residues 1-33 (MFSSLKNKLNTFKSTLSLGVFLLFSAFANQALA).

It localises to the secreted. This chain is Colonization factor (cep), found in Vibrio cholerae serotype O1 (strain ATCC 39315 / El Tor Inaba N16961).